Reading from the N-terminus, the 473-residue chain is Glutamine synthetase (473 aa).

In terms of domain architecture, GS beta-grasp spans 15 to 100 (ENIKIIDLKF…ICSIKEPRTG (86 aa)). A GS catalytic domain is found at 107–473 (PRTIAAKAVE…PYEFSLYYDC (367 aa)). Residue Glu132 coordinates Mn(2+). Mg(2+) is bound at residue Glu134. Glu210 is an ATP binding site. Mg(2+)-binding residues include Glu215 and Glu223. L-glutamate-binding positions include 267–268 (NG) and Gly268. Residue His272 coordinates Mg(2+). ATP is bound by residues 274–276 (HQS) and Ser276. Residues Arg324, Glu330, and Arg342 each contribute to the L-glutamate site. Arg342, Arg347, and Lys356 together coordinate ATP. A Mn(2+)-binding site is contributed by Glu361. Arg363 is a binding site for L-glutamate. The residue at position 401 (Tyr401) is an O-AMP-tyrosine.

The protein belongs to the glutamine synthetase family. As to quaternary structure, oligomer of 12 subunits arranged in the form of two hexagons. Mg(2+) serves as cofactor.

It localises to the cytoplasm. It catalyses the reaction L-glutamate + NH4(+) + ATP = L-glutamine + ADP + phosphate + H(+). Its activity is regulated as follows. Inhibited by ADP (90%), AMP (80%), alanine (52%) and aspartate (41%). The activity of this enzyme could be controlled by adenylation under conditions of abundant glutamine. Functionally, involved in nitrogen metabolism via ammonium assimilation. Catalyzes the ATP-dependent biosynthesis of glutamine from glutamate and ammonia. In Synechocystis sp. (strain ATCC 27184 / PCC 6803 / Kazusa), this protein is Glutamine synthetase.